We begin with the raw amino-acid sequence, 140 residues long: Small ribosomal subunit protein bS6 (140 aa).

Residues 96 to 140 (VTGQSEMLKAEENRSERRERRDRPEHEGADSADSDDSDNSDNADE) are disordered. Residues 103-124 (LKAEENRSERRERRDRPEHEGA) show a composition bias toward basic and acidic residues. Positions 125–140 (DSADSDDSDNSDNADE) are enriched in acidic residues.

It belongs to the bacterial ribosomal protein bS6 family.

In terms of biological role, binds together with bS18 to 16S ribosomal RNA. This chain is Small ribosomal subunit protein bS6, found in Pseudomonas fluorescens (strain SBW25).